Reading from the N-terminus, the 768-residue chain is Valine--tRNA ligase (768 aa).

Residues 37-47 carry the 'HIGH' region motif; that stretch reads PTVSGKMHMGH. Residues 510-514 carry the 'KMSKS' region motif; sequence KMSKS. Lys513 lines the ATP pocket.

The protein belongs to the class-I aminoacyl-tRNA synthetase family. ValS type 2 subfamily.

The protein resides in the cytoplasm. It carries out the reaction tRNA(Val) + L-valine + ATP = L-valyl-tRNA(Val) + AMP + diphosphate. Catalyzes the attachment of valine to tRNA(Val). As ValRS can inadvertently accommodate and process structurally similar amino acids such as threonine, to avoid such errors, it has a 'posttransfer' editing activity that hydrolyzes mischarged Thr-tRNA(Val) in a tRNA-dependent manner. The sequence is that of Valine--tRNA ligase from Picrophilus torridus (strain ATCC 700027 / DSM 9790 / JCM 10055 / NBRC 100828 / KAW 2/3).